The following is a 314-amino-acid chain: Protein nutcracker (314 aa).

The tract at residues 1–62 (MSDTKSEIEG…PRLIQEKSTQ (62 aa)) is disordered. Low complexity predominate over residues 21-34 (QQQQQPQQQQNEQQ). The segment at 257 to 314 (MQMEMKLQPSLLGLPDELYFEIFRYLDKSQLNVVARVNRHLHFYSKEVERKRLKGGRS) is required for interaction with skpA and Cul1, but not with PI31. Positions 264 to 309 (QPSLLGLPDELYFEIFRYLDKSQLNVVARVNRHLHFYSKEVERKRL) constitute an F-box domain.

As to quaternary structure, component of an SCF (SKP1-CUL1-F-box protein) E3 ubiquitin-protein ligase complex, at least composed of ntc, skpA and Cul1. Interacts (via F-box domain) with skpA and Cul1. Interacts with Prosalpha7 and PI31. Interacts with Bruce. As to expression, expressed in testis (at protein level).

It is found in the cytoplasm. Functionally, functions together with PI31 to control non-apoptotic caspase activation during sperm individualization. Positively regulates PI31 stability. This Drosophila melanogaster (Fruit fly) protein is Protein nutcracker.